Reading from the N-terminus, the 216-residue chain is Trypsin inhibitor A (216 aa).

Positions 1-24 are cleaved as a signal peptide; sequence MKSTIFFLFLFCAFTTSYLPSAIA. 2 disulfides stabilise this stretch: Cys-63–Cys-110 and Cys-160–Cys-169. A propeptide spanning residues 206 to 216 is cleaved from the precursor; that stretch reads AKKNHGLSRSE.

It belongs to the protease inhibitor I3 (leguminous Kunitz-type inhibitor) family.

Inhibition of trypsin. The polypeptide is Trypsin inhibitor A (KTI3) (Glycine max (Soybean)).